Here is a 162-residue protein sequence, read N- to C-terminus: Caveolin-2 (162 aa).

The Cytoplasmic portion of the chain corresponds to 1–86 (MGLETEKADV…FEISKYVMYK (86 aa)). Phosphotyrosine; by SRC is present on tyrosine 19. Phosphoserine is present on residues serine 20 and serine 23. Residue tyrosine 27 is modified to Phosphotyrosine; by SRC. Phosphoserine is present on serine 36. The helical intramembrane region spans 87 to 107 (FLTVFLAIPLAFIAGILFATL). Over 108–162 (SCLHIWILMPFVKTCLMVLPSVQTIWKSVTDVIIAPLCTSVGRCFSSVSLQLSQD) the chain is Cytoplasmic.

This sequence belongs to the caveolin family. As to quaternary structure, monomer or homodimer. Interacts with CAV1; the interaction forms a stable heterooligomeric complex that is required for targeting to lipid rafts and for caveolae formation. Tyrosine phosphorylated forms do not form heterooligomers with the Tyr-19-phosphorylated form existing as a monomer or dimer, and the Tyr-27-form as a monomer only. Interacts (tyrosine phosphorylated form) with the SH2 domain-containing proteins, RASA1, NCK1 and SRC. Interacts (tyrosine phosphorylated form) with INSR, the interaction (Tyr-27-phosphorylated form) is increased on insulin stimulation. Interacts (Tyr-19 phosphorylated form) with MAPK1 (phosphorylated form); the interaction, promoted by insulin, leads to nuclear location and MAPK1 activation. Interacts with STAT3; the interaction is increased on insulin-induced tyrosine phosphorylation leading to STAT activation. Phosphorylated on serine and tyrosine residues. CAV1 promotes phosphorylation on Ser-23 which then targets the complex to the plasma membrane, lipid rafts and caveolae. Phosphorylation on Ser-36 appears to modulate mitosis in endothelial cells. Phosphorylation on both Tyr-19 and Tyr-27 is required for insulin-induced 'Ser-727' phosphorylation of STAT3 and its activation. Phosphorylation on Tyr-19 is required for insulin-induced phosphorylation of MAPK1 and DNA binding of STAT3. Tyrosine phosphorylation is induced by both EGF and insulin (By. similarity).

The protein localises to the nucleus. Its subcellular location is the cytoplasm. It localises to the golgi apparatus membrane. It is found in the cell membrane. The protein resides in the membrane. The protein localises to the caveola. In terms of biological role, may act as a scaffolding protein within caveolar membranes. Interacts directly with G-protein alpha subunits and can functionally regulate their activity. Acts as an accessory protein in conjunction with CAV1 in targeting to lipid rafts and driving caveolae formation. The Ser-36 phosphorylated form has a role in modulating mitosis in endothelial cells. Positive regulator of cellular mitogenesis of the MAPK signaling pathway. Required for the insulin-stimulated nuclear translocation and activation of MAPK1 and STAT3, and the subsequent regulation of cell cycle progression. This is Caveolin-2 (CAV2) from Pan troglodytes (Chimpanzee).